The sequence spans 488 residues: Stromelysin-3 (488 aa).

Positions 1 to 31 (MAPAAWLRSAAARALLPPMLLLLLQPPPLLA) are cleaved as a signal peptide. Positions 32–97 (RALPPDAHHL…GLSARNRQKR (66 aa)) are cleaved as a propeptide — activation peptide. A disordered region spans residues 41–93 (LHAERRGPQPWHAALPSSPAPAPATQEAPRPASSLRPPRCGVPDPSDGLSARN). Low complexity predominate over residues 50–79 (PWHAALPSSPAPAPATQEAPRPASSLRPPR). The Cysteine switch signature appears at 78 to 85 (PRCGVPDP). Cys-80 and Asp-166 together coordinate Zn(2+). Ca(2+)-binding residues include Asp-171, Gly-172, Gly-174, and Ile-176. The Zn(2+) site is built by His-179, His-192, and His-215. Glu-216 is an active-site residue. Zn(2+) contacts are provided by His-219 and His-225. Hemopexin repeat units lie at residues 291–339 (PDAC…WQGL), 340–382 (PSPV…ELGL), 384–432 (RFPV…WRGV), and 433–480 (PSEI…FFGC). Cys-294 and Cys-480 are joined by a disulfide.

The protein belongs to the peptidase M10A family. It depends on Ca(2+) as a cofactor. Zn(2+) serves as cofactor. Post-translationally, the precursor is cleaved by a furin endopeptidase. In terms of tissue distribution, specifically expressed in stromal cells of breast carcinomas.

The protein resides in the secreted. It localises to the extracellular space. It is found in the extracellular matrix. Functionally, may play an important role in the progression of epithelial malignancies. This chain is Stromelysin-3 (MMP11), found in Homo sapiens (Human).